Reading from the N-terminus, the 243-residue chain is MAKGIPVLEIFGPTIQGEGMVIGQKTMFVRTAGCDYSCSWCDSAFTWDGSAKKDIRWMTAEEIFAELKDIGGDAFSHVTISGGNPALLKQLDAFIELLKENNIRAALETQGTVYQDWFTLIDDLTISPKPPSSKMVTNFQKLDHILTSLQENDRQHAVSLKVVIFNDEDLEFAKTVHKRYPGIPFYLQVGNDDVHTTDDQSLIAHLLGKYEALVDKVAVDAELNLVRVLPQLHTLLWGNKRGV.

Substrate is bound by residues 15–17 (IQG) and Arg30. In terms of domain architecture, Radical SAM core spans 21–239 (VIGQKTMFVR…PQLHTLLWGN (219 aa)). Residues Cys34, Cys38, and Cys41 each coordinate [4Fe-4S] cluster. Ser43 contacts Mg(2+). Residue Ser81 participates in substrate binding. Residues Gly83 and 127–129 (SPK) contribute to the S-adenosyl-L-methionine site.

This sequence belongs to the radical SAM superfamily. 7-carboxy-7-deazaguanine synthase family. In terms of assembly, homodimer. [4Fe-4S] cluster serves as cofactor. Requires S-adenosyl-L-methionine as cofactor. Mg(2+) is required as a cofactor.

It carries out the reaction 6-carboxy-5,6,7,8-tetrahydropterin + H(+) = 7-carboxy-7-deazaguanine + NH4(+). It functions in the pathway purine metabolism; 7-cyano-7-deazaguanine biosynthesis. Its function is as follows. Catalyzes the complex heterocyclic radical-mediated conversion of 6-carboxy-5,6,7,8-tetrahydropterin (CPH4) to 7-carboxy-7-deazaguanine (CDG), a step common to the biosynthetic pathways of all 7-deazapurine-containing compounds. The sequence is that of 7-carboxy-7-deazaguanine synthase from Bacillus subtilis (strain 168).